The following is a 354-amino-acid chain: Alternative oxidase, mitochondrial (354 aa).

Residues 1 to 64 constitute a mitochondrion transit peptide; sequence MNSMSTTGPI…RFISSTPQSQ (64 aa). The helical transmembrane segment at 153–173 threads the bilayer; sequence FVFLESVAGVPGMVGGMLRHL. Residues Glu157, Glu196, and His199 each contribute to the Fe cation site. The chain crosses the membrane as a helical span at residues 215-235; sequence LMVLGAQGVFFNGFFLSYLIS. Fe cation-binding residues include Glu247, Glu302, and His305. Residues 333–354 form a disordered region; sequence KPHPGKGIKHLKTTGWEREEVV. The segment covering 335-344 has biased composition (basic residues); sequence HPGKGIKHLK.

The protein belongs to the alternative oxidase family. Fe cation serves as cofactor.

The protein resides in the mitochondrion inner membrane. Its function is as follows. Catalyzes cyanide-resistant oxygen consumption. May increase respiration when the cytochrome respiratory pathway is restricted, or in response to low temperatures. This is Alternative oxidase, mitochondrial (alxA) from Emericella nidulans (strain FGSC A4 / ATCC 38163 / CBS 112.46 / NRRL 194 / M139) (Aspergillus nidulans).